Here is a 390-residue protein sequence, read N- to C-terminus: Phosphoglycerate kinase (390 aa).

Residues aspartate 21–asparagine 23, arginine 36, histidine 59–arginine 62, arginine 113, and arginine 146 contribute to the substrate site. Residues lysine 197, glutamate 319, and glycine 345–threonine 348 contribute to the ATP site.

Belongs to the phosphoglycerate kinase family. In terms of assembly, monomer.

The protein resides in the cytoplasm. The catalysed reaction is (2R)-3-phosphoglycerate + ATP = (2R)-3-phospho-glyceroyl phosphate + ADP. It participates in carbohydrate degradation; glycolysis; pyruvate from D-glyceraldehyde 3-phosphate: step 2/5. The protein is Phosphoglycerate kinase of Laribacter hongkongensis (strain HLHK9).